We begin with the raw amino-acid sequence, 324 residues long: Serpentine receptor class delta-30 (324 aa).

Transmembrane regions (helical) follow at residues 5–25, 38–58, 83–103, 124–144, 176–196, 227–247, and 258–278; these read IIHS…MYLA, AIIT…FFVM, ACYV…IWMI, VFVA…WFSF, ITLI…YIWI, FQVF…SMFT, and AISV…ILFV. The segment at 290–324 is disordered; that stretch reads KQPKPHPEMCGPIRSNTRTTSISVTNNSSHLSSAH. Polar residues predominate over residues 303 to 324; the sequence is RSNTRTTSISVTNNSSHLSSAH.

Belongs to the nematode receptor-like protein srd family.

The protein resides in the membrane. The protein is Serpentine receptor class delta-30 (srd-30) of Caenorhabditis elegans.